We begin with the raw amino-acid sequence, 442 residues long: Cyclin-A1-2 (442 aa).

2 stretches are compositionally biased toward polar residues: residues 1–12 (MSSSSRNLSQEN) and 39–63 (ITNQ…NKIG). The segment at 1–72 (MSSSSRNLSQ…GQSKKAPKPA (72 aa)) is disordered.

It belongs to the cyclin family. Cyclin AB subfamily. Interacts with CDC20-1, CDC20-2, FZR2/CCS52A1 and FZR1/CCS52A2. As to expression, expressed in roots, stems and flowers.

The protein resides in the cytoplasm. It localises to the nucleus. Its function is as follows. Involved in the regulation of male meiosis progression. This chain is Cyclin-A1-2 (CYCA1-2), found in Arabidopsis thaliana (Mouse-ear cress).